A 122-amino-acid polypeptide reads, in one-letter code: Large ribosomal subunit protein uL18 (122 aa).

Belongs to the universal ribosomal protein uL18 family. Part of the 50S ribosomal subunit; part of the 5S rRNA/L5/L18/L25 subcomplex. Contacts the 5S and 23S rRNAs.

This is one of the proteins that bind and probably mediate the attachment of the 5S RNA into the large ribosomal subunit, where it forms part of the central protuberance. This Thermosipho africanus (strain TCF52B) protein is Large ribosomal subunit protein uL18.